The following is a 580-amino-acid chain: Microcin-J25 export ATP-binding/permease protein McjD (580 aa).

The next 6 membrane-spanning stretches (helical) occupy residues 25–45 (FFSMLFITSLSSIIISISPLI), 66–86 (VLLACLYMFCVISNKASVFLF), 143–163 (VSQNILSPVIQLISTIVVVLS), 167–187 (WFSAGVFFLYILVFVIFNTRL), 261–281 (AVILFGSVFIYNILGVLNGVV), and 286–306 (FIMITSYIILLSTPVENIGAL). Residues 25-312 (FFSMLFITSL…IGALLSEIRQ (288 aa)) enclose the ABC transmembrane type-1 domain. Residues 345-578 (LSIRELSFSY…NEYISGLASV (234 aa)) enclose the ABC transporter domain. 378–385 (GPSGSGKS) is a binding site for ATP.

This sequence belongs to the ABC transporter superfamily. Homodimer.

The protein localises to the cell inner membrane. Its function is as follows. Is able to protect a cell, which harbors the plasmid pTUC100 encoding microcin J25, against microcin J25. Is required for microcin J25 export out of the producing cells. This Escherichia coli protein is Microcin-J25 export ATP-binding/permease protein McjD (mcjD).